A 188-amino-acid chain; its full sequence is Transmembrane protein 160 (188 aa).

The N-terminal 96 residues, 1–96 (MGGGWWWARA…ISFMQSDMGR (96 aa)), are a transit peptide targeting the mitochondrion. A disordered region spans residues 25–52 (PPRPRSGGARGSFAPGHGPRAGASPPPV). Residues 29-38 (RSGGARGSFA) show a composition bias toward low complexity. Ser48 is subject to Phosphoserine. The next 2 membrane-spanning stretches (helical) occupy residues 102-122 (FFLLGGLCVVWGGASYVVGLA) and 135-155 (AAAGVGAVLAAGLLWACAVGL).

This sequence belongs to the TMEM160 family.

The protein resides in the mitochondrion inner membrane. The sequence is that of Transmembrane protein 160 from Bos taurus (Bovine).